The following is a 202-amino-acid chain: Protein cuti-1 (202 aa).

Topologically, residues 1–37 (MPNDRVAPLPPNFVYSPHDKFYYAPATCNSMHYTTAS) are cytoplasmic. The chain crosses the membrane as a helical span at residues 38 to 58 (YISAFIEFLVMGTGAICFYVM). Over 59-68 (SHKSDSIGKW) the chain is Extracellular. Residues 69 to 89 (LFYIQAGITVLSLLTSALMAF) form a helical membrane-spanning segment. Residues 90–107 (GLWKENPQMLGSKLKFIE) lie on the Cytoplasmic side of the membrane. The chain crosses the membrane as a helical span at residues 108-128 (FIICFLLIWAVISIVCMAFGI). The Extracellular segment spans residues 129 to 148 (QFTRQVFGIFGKVHRIEQDY). The chain crosses the membrane as a helical span at residues 149-169 (GPIWPFNIAVVSFFTAAIAIW). Residues 170-202 (TRIIIQGAADYLYDKAYFADKQNVELRESSKTR) lie on the Cytoplasmic side of the membrane.

Interacts with vps-39.

It is found in the cell membrane. The protein resides in the cytoplasm. Involved in cuticle formation and ensures cuticle shedding during larval development. Plays a role in maintaining the hypodermis. In association with vps-39, may play a role in vesicle tethering. The protein is Protein cuti-1 of Caenorhabditis elegans.